The chain runs to 760 residues: MKFKLFLGSSFFGVATLLIACGTGRFDQIDDGKIKLAVVTSPSAASSLQTLLDQYNNTKAPADYPVEVVSLDSTGSYTKGKFDTQKRLAAKDKNNFYNLTFNYPDLVSSLAINGMELNLDGVNVSNFEQSFLDFNKNISGVRKPGIYALPATMSGEVLVLNGPVLHYILNSAKKKDGTESKIKTAQLKTASTQAEVKGTMTMASDEQTTKLWTNIQNAAKENAANGTTEKAEKTVSASSLQLKNTNKTTEGTLKIGTDDNTKNLWKKIEDAAKTNGEKGNEKQEATQSNASASLVKLDQKNTSQDKTQNTQTSDDEIKKSWGEYKEVEGGLKGYEFKADVFESWEKLNDFAVRVAKSFSKVSEEKKSGSDIQGVFGIGSLENALYTASFAAGGGDYNNFLFNIKKGRADFSNFFNHNSKTFQSLRDIFNSFKPLIDQKGLISNKHFDTPVNNYAKFHQLAFYVSSTARFPYSFAKDNVKRLIIGKRELEVNPKSMFAIKKENGNNGNSNLLGKVALDNNKSIELYENNIPNGKTDAILIKNQTLISALKNPKQTKSSQRSSQSTNTQNDAICYLAFNSKIRPDDKDIFLLDKFGEKFVTAIVNFEEKTEVKINTLQEKEAVVLPAPQKFKPTDPKSVALVQGPSLIGIHANANEDRSTIKFLNWYLNAEVDWKDGEKKTPAEYLAEKASYLLPFKKVLEKSKQNIKATSKEGEQNQGKKGDGAQNQGKKGDGAQNGKNDKAKHNGFCRYCRQPIFKRFCR.

Positions 1 to 20 (MKFKLFLGSSFFGVATLLIA) are cleaved as a signal peptide. Cys-21 is lipidated: N-palmitoyl cysteine. Cys-21 carries the S-diacylglycerol cysteine lipid modification. 3 disordered regions span residues 221 to 243 (ENAANGTTEKAEKTVSASSLQLK), 272 to 315 (AKTN…TSDD), and 705 to 741 (IKATSKEGEQNQGKKGDGAQNQGKKGDGAQNGKNDKA). Basic and acidic residues predominate over residues 272 to 284 (AKTNGEKGNEKQE). Over residues 300-312 (KNTSQDKTQNTQT) the composition is skewed to polar residues. Residues 705–721 (IKATSKEGEQNQGKKGD) show a composition bias toward basic and acidic residues.

The protein belongs to the MG185/MG260 family.

The protein localises to the cell membrane. This is an uncharacterized protein from Mycoplasma pneumoniae (strain ATCC 29342 / M129 / Subtype 1) (Mycoplasmoides pneumoniae).